The chain runs to 161 residues: SsrA-binding protein (161 aa).

This sequence belongs to the SmpB family.

It is found in the cytoplasm. In terms of biological role, required for rescue of stalled ribosomes mediated by trans-translation. Binds to transfer-messenger RNA (tmRNA), required for stable association of tmRNA with ribosomes. tmRNA and SmpB together mimic tRNA shape, replacing the anticodon stem-loop with SmpB. tmRNA is encoded by the ssrA gene; the 2 termini fold to resemble tRNA(Ala) and it encodes a 'tag peptide', a short internal open reading frame. During trans-translation Ala-aminoacylated tmRNA acts like a tRNA, entering the A-site of stalled ribosomes, displacing the stalled mRNA. The ribosome then switches to translate the ORF on the tmRNA; the nascent peptide is terminated with the 'tag peptide' encoded by the tmRNA and targeted for degradation. The ribosome is freed to recommence translation, which seems to be the essential function of trans-translation. This chain is SsrA-binding protein, found in Psychromonas ingrahamii (strain DSM 17664 / CCUG 51855 / 37).